Here is a 327-residue protein sequence, read N- to C-terminus: Putative gluconeogenesis factor (327 aa).

The protein belongs to the gluconeogenesis factor family.

The protein localises to the cytoplasm. In terms of biological role, required for morphogenesis under gluconeogenic growth conditions. The sequence is that of Putative gluconeogenesis factor (yjiF) from Lactococcus lactis subsp. lactis (strain IL1403) (Streptococcus lactis).